A 622-amino-acid polypeptide reads, in one-letter code: DNA polymerase II small subunit (622 aa).

The tract at residues 76–113 (ISTGEGSQKVPDHEELEKITNESSVESSISTGETPKTE) is disordered. The segment covering 85–95 (VPDHEELEKIT) has biased composition (basic and acidic residues). The span at 96 to 109 (NESSVESSISTGET) shows a compositional bias: polar residues.

Belongs to the DNA polymerase delta/II small subunit family. In terms of assembly, heterodimer of a large subunit and a small subunit.

It catalyses the reaction DNA(n) + a 2'-deoxyribonucleoside 5'-triphosphate = DNA(n+1) + diphosphate. It carries out the reaction Exonucleolytic cleavage in the 3'- to 5'-direction to yield nucleoside 5'-phosphates.. Possesses two activities: a DNA synthesis (polymerase) and an exonucleolytic activity that degrades single-stranded DNA in the 3' to 5' direction. Has a template-primer preference which is characteristic of a replicative DNA polymerase. This chain is DNA polymerase II small subunit (polB), found in Pyrococcus horikoshii (strain ATCC 700860 / DSM 12428 / JCM 9974 / NBRC 100139 / OT-3).